The primary structure comprises 93 residues: Cell division topological specificity factor (93 aa).

The protein belongs to the MinE family.

Its function is as follows. Prevents the cell division inhibition by proteins MinC and MinD at internal division sites while permitting inhibition at polar sites. This ensures cell division at the proper site by restricting the formation of a division septum at the midpoint of the long axis of the cell. In Synechococcus sp. (strain WH7803), this protein is Cell division topological specificity factor.